Here is a 296-residue protein sequence, read N- to C-terminus: Cytidine deaminase (296 aa).

CMP/dCMP-type deaminase domains follow at residues 47-167 (TEAE…FGPK) and 186-296 (DSSD…VDPV). A substrate-binding site is contributed by 88–90 (NLE). Zn(2+) is bound at residue H101. The active-site Proton donor is E103. Positions 128 and 131 each coordinate Zn(2+).

The protein belongs to the cytidine and deoxycytidylate deaminase family. Homodimer. Requires Zn(2+) as cofactor.

It carries out the reaction cytidine + H2O + H(+) = uridine + NH4(+). The enzyme catalyses 2'-deoxycytidine + H2O + H(+) = 2'-deoxyuridine + NH4(+). Its function is as follows. This enzyme scavenges exogenous and endogenous cytidine and 2'-deoxycytidine for UMP synthesis. The chain is Cytidine deaminase from Shewanella sp. (strain MR-4).